Reading from the N-terminus, the 288-residue chain is GTP-binding protein 8 (288 aa).

Residues 109-282 (HRPEVCFIGR…RCFIADITGN (174 aa)) enclose the EngB-type G domain. GTP contacts are provided by residues 117–124 (GRSNVGKS), 146–150 (GHTKK), 164–167 (DMPG), 226–229 (TKID), and 261–263 (VSA). Serine 124 and threonine 148 together coordinate Mg(2+).

It belongs to the TRAFAC class TrmE-Era-EngA-EngB-Septin-like GTPase superfamily. EngB GTPase family. Requires Mg(2+) as cofactor.

The chain is GTP-binding protein 8 (GTPBP8) from Bos taurus (Bovine).